Here is a 173-residue protein sequence, read N- to C-terminus: Alpha-crystallin A chain (173 aa).

Methionine 1 is modified (N-acetylmethionine). The tract at residues 1–63 is required for complex formation with BFSP1 and BFSP2; during homooligomerization, mediates the association of 2 dimers to form a tetramer; that stretch reads MDVTIQHPWF…RTVLDSGISE (63 aa). Glutamine 6 is subject to Deamidated glutamine; partial. Serine 45 carries the phosphoserine modification. At glutamine 50 the chain carries Deamidated glutamine; partial. Positions 52–164 constitute a sHSP domain; sequence LFRTVLDSGI…AERAIPVSRE (113 aa). An N6-acetyllysine modification is found at lysine 70. Glutamine 90 is subject to Deamidated glutamine; partial. Lysine 99 is modified (N6-acetyllysine). Histidine 100 lines the Zn(2+) pocket. A Deamidated asparagine; partial modification is found at asparagine 101. Residues glutamate 102 and histidine 107 each contribute to the Zn(2+) site. Serine 122 carries the post-translational modification Phosphoserine. The residue at position 123 (asparagine 123) is a Deamidated asparagine; partial. Cysteine 131 and cysteine 142 form a disulfide bridge. Glutamine 147 bears the Deamidated glutamine; partial mark. Zn(2+) is bound at residue histidine 154. A glycan (O-linked (GlcNAc) serine) is linked at serine 162.

This sequence belongs to the small heat shock protein (HSP20) family. In terms of assembly, heteropolymer composed of three CRYAA and one CRYAB subunits. Inter-subunit bridging via zinc ions enhances stability, which is crucial as there is no protein turn over in the lens. Can also form homodimers and homotetramers (dimers of dimers) which serve as the building blocks of homooligomers. Within homooligomers, the zinc-binding motif is created from residues of 3 different molecules. His-100 and Glu-102 from one molecule are ligands of the zinc ion, and His-107 and His-154 residues from additional molecules complete the site with tetrahedral coordination geometry. Part of a complex required for lens intermediate filament formation composed of BFSP1, BFSP2 and CRYAA. O-glycosylated; contains N-acetylglucosamine side chains. Post-translationally, deamidation of Asn-101 in lens occurs mostly during the first 30 years of age, followed by a small additional amount of deamidation (approximately 5%) during the next approximately 38 years, resulting in a maximum of approximately 50% deamidation during the lifetime of the individual. In terms of processing, phosphorylation on Ser-122 seems to be developmentally regulated. Absent in the first months of life, it appears during the first 12 years of human lifetime. The relative amount of phosphorylated form versus unphosphorylated form does not change over the lifetime of the individual. Acetylation at Lys-70 may increase chaperone activity. Post-translationally, undergoes age-dependent proteolytical cleavage at the C-terminus. Alpha-crystallin A(1-172) is the most predominant form produced most rapidly during the first 12 years of age and after this age is present in approximately 50% of the lens molecules. In terms of processing, in young individuals and during the first approximately 30 years of life, less than half molecules contain an intramolecular disulfide bond (oxidized form), while in the remaining fraction the cysteines are in the free sulfhydryl form (reduced form). With aging, the amount of oxidized form increases up to 90% and it becomes a major constituent of high molecular weight aggregates, concomitant with an age-dependent loss of its chaperone activity. The reduced form is undetectable in cataractous lenses. In terms of tissue distribution, expressed in the eye lens (at protein level).

The protein resides in the cytoplasm. Its subcellular location is the nucleus. In terms of biological role, contributes to the transparency and refractive index of the lens. In its oxidized form (absence of intramolecular disulfide bond), acts as a chaperone, preventing aggregation of various proteins under a wide range of stress conditions. Required for the correct formation of lens intermediate filaments as part of a complex composed of BFSP1, BFSP2 and CRYAA. The protein is Alpha-crystallin A chain (CRYAA) of Homo sapiens (Human).